The chain runs to 458 residues: Transcription factor PCF5 (458 aa).

4 disordered regions span residues 1 to 103 (MGDA…RGPR), 159 to 182 (GAGA…ENSD), 278 to 299 (MFHH…TTQQ), and 424 to 458 (RLPA…ASHH). Positions 65–74 (RGGGGGGGGE) are enriched in gly residues. Residues 89–147 (RKDRHSKVCTARGPRDRRVRLSAHTAIQFYDVQDRLGYDRPSKAVDWLIKNAKDAIDKL) enclose the TCP domain.

Forms homodimers and heterodimers.

The protein resides in the nucleus. Functionally, transcription activator. Binds the promoter core sequence 5'-GGNCC-3'. In Oryza sativa subsp. japonica (Rice), this protein is Transcription factor PCF5 (PCF5).